The following is a 112-amino-acid chain: Putative pterin-4-alpha-carbinolamine dehydratase (112 aa).

The protein belongs to the pterin-4-alpha-carbinolamine dehydratase family.

It carries out the reaction (4aS,6R)-4a-hydroxy-L-erythro-5,6,7,8-tetrahydrobiopterin = (6R)-L-erythro-6,7-dihydrobiopterin + H2O. In Shewanella amazonensis (strain ATCC BAA-1098 / SB2B), this protein is Putative pterin-4-alpha-carbinolamine dehydratase.